Reading from the N-terminus, the 529-residue chain is uncharacterized protein (529 aa).

Positions 13–129 (QTAMRKMRAL…LSTLCQEAQR (117 aa)) constitute an Arf-GAP domain. The segment at 28–51 (CFDCGARNPTWCTVTYGVFLCIDC) adopts a C4-type zinc-finger fold. Basic and acidic residues predominate over residues 291–301 (QMEAKVAKDPT). Disordered regions lie at residues 291 to 313 (QMEA…GMGG), 335 to 357 (VLTF…DDKY), 398 to 424 (KSRY…GASP), and 468 to 493 (FGSE…SDLK). Low complexity predominate over residues 399–420 (SRYTASSSSSSTSRAPTTRLTA). Polar residues predominate over residues 476-487 (NGSQQRQSSQVP).

Its function is as follows. GTPase-activating protein for the ADP ribosylation factor family. This is an uncharacterized protein from Caenorhabditis elegans.